The primary structure comprises 401 residues: Beta-ketoadipyl-CoA thiolase (401 aa).

Catalysis depends on Cys-90, which acts as the Acyl-thioester intermediate. Catalysis depends on proton acceptor residues His-357 and Cys-387.

It belongs to the thiolase-like superfamily. Thiolase family.

The enzyme catalyses succinyl-CoA + acetyl-CoA = 3-oxoadipyl-CoA + CoA. Its pathway is aromatic compound metabolism; phenylacetate degradation. Catalyzes thiolytic cleavage of beta-ketoadipyl-CoA to succinyl-CoA and acetyl-CoA. The polypeptide is Beta-ketoadipyl-CoA thiolase (paaJ) (Escherichia coli).